The primary structure comprises 350 residues: MRSLTIRRPDDWHLHLRDGAMLEGVIGDTSRHFARAIIMPNLVPPVVTTADAEAYRQRILAAVPKGDRFEPLMTLYLTEQTSPDDVEEGKTTGLITAVKLYPAGATTNSHGGVRDLDKAMPVLERMAKIGLPLCVHGEVTTPEVDIFDREAVFIDTVLDPLRRRLPELKVTMEHVTTSDGIDYILSADSNLAGSITTHHLIINRNAILVGGIRPHYYCLPVAKRESHRLALRRAATSGDSRFFLGTDSAPHVDPLKECGCGCAGIYTSINTMSCLAHVFEEDEALERLEAFVSLNGPAWYGLQPNDEMITLVRRDAPVAFPAKIETGAGPVTVFDPMFPIHWDVEAAIQA.

His13 and His15 together coordinate Zn(2+). Substrate is bound by residues 15 to 17 (HLR) and Asn41. Zn(2+) is bound by residues Lys99, His136, and His174. Lys99 carries the post-translational modification N6-carboxylysine. Residue His136 participates in substrate binding. Substrate is bound at residue Leu219. Asp247 provides a ligand contact to Zn(2+). The active site involves Asp247. Substrate contacts are provided by His251 and Ala263.

This sequence belongs to the metallo-dependent hydrolases superfamily. DHOase family. Class II DHOase subfamily. As to quaternary structure, homodimer. The cofactor is Zn(2+).

It catalyses the reaction (S)-dihydroorotate + H2O = N-carbamoyl-L-aspartate + H(+). It functions in the pathway pyrimidine metabolism; UMP biosynthesis via de novo pathway; (S)-dihydroorotate from bicarbonate: step 3/3. Catalyzes the reversible cyclization of carbamoyl aspartate to dihydroorotate. The chain is Dihydroorotase from Allorhizobium ampelinum (strain ATCC BAA-846 / DSM 112012 / S4) (Agrobacterium vitis (strain S4)).